The chain runs to 172 residues: Protein GrpE (172 aa).

The protein belongs to the GrpE family. In terms of assembly, homodimer.

It is found in the cytoplasm. Functionally, participates actively in the response to hyperosmotic and heat shock by preventing the aggregation of stress-denatured proteins, in association with DnaK and GrpE. It is the nucleotide exchange factor for DnaK and may function as a thermosensor. Unfolded proteins bind initially to DnaJ; upon interaction with the DnaJ-bound protein, DnaK hydrolyzes its bound ATP, resulting in the formation of a stable complex. GrpE releases ADP from DnaK; ATP binding to DnaK triggers the release of the substrate protein, thus completing the reaction cycle. Several rounds of ATP-dependent interactions between DnaJ, DnaK and GrpE are required for fully efficient folding. The sequence is that of Protein GrpE from Thermotoga sp. (strain RQ2).